We begin with the raw amino-acid sequence, 115 residues long: UPF0295 protein BLi00901/BL05075 (115 aa).

2 helical membrane passes run 18 to 38 (LVFIGFIIMYVGVFFRSSVLL) and 41 to 61 (VFMILGVLSILLSTAVYFWIG).

The protein belongs to the UPF0295 family.

Its subcellular location is the cell membrane. This is UPF0295 protein BLi00901/BL05075 from Bacillus licheniformis (strain ATCC 14580 / DSM 13 / JCM 2505 / CCUG 7422 / NBRC 12200 / NCIMB 9375 / NCTC 10341 / NRRL NRS-1264 / Gibson 46).